A 233-amino-acid polypeptide reads, in one-letter code: 2,3,4,5-tetrahydropyridine-2,6-dicarboxylate N-acetyltransferase (233 aa).

This sequence belongs to the transferase hexapeptide repeat family. DapH subfamily.

The catalysed reaction is (S)-2,3,4,5-tetrahydrodipicolinate + acetyl-CoA + H2O = L-2-acetamido-6-oxoheptanedioate + CoA. The protein operates within amino-acid biosynthesis; L-lysine biosynthesis via DAP pathway; LL-2,6-diaminopimelate from (S)-tetrahydrodipicolinate (acetylase route): step 1/3. In terms of biological role, catalyzes the transfer of an acetyl group from acetyl-CoA to tetrahydrodipicolinate. The polypeptide is 2,3,4,5-tetrahydropyridine-2,6-dicarboxylate N-acetyltransferase (Thermotoga petrophila (strain ATCC BAA-488 / DSM 13995 / JCM 10881 / RKU-1)).